We begin with the raw amino-acid sequence, 520 residues long: MSLKEEQVSIKQDPEQEERQHDQFNDVQIKQESQDHDGVDSQYTNGTQNDDSERFEAAESDVKVEPGLGMGITSSQSEKGQVLPDQPEIKFIRRQINGYVGFANLPKQWHRRSIKNGFSFNLLCVGPDGIGKTTLMKTLFNNDDIEANLVKDYEEELANDQEEEEGQGEGHENQSQEQRHKVKIKSYESVIEENGVKLNLNVIDTEGFGDFLNNDQKSWDPIIKEIDSRFDQYLDAENKINRHSINDKRIHACLYFIEPTGHYLKPLDLKFMQSVYEKCNLIPVIAKSDILTDEEILSFKKTIMNQLIQSNIELFKPPIYSNDDAENSHLSERLFSSLPYAVIGSNDIVENYSGNQVRGRSYPWGVIEVDNDNHSDFNLLKNLLIKQFMEELKERTSKILYENYRSSKLAKLGIKQDNSVFKEFDPISKQQEEKTLHEAKLAKLEIEMKTVFQQKVSEKEKKLQKSETELFARHKEMKEKLTKQLKALEDKKKQLELSINSASPNVNHSPVPTKKKGFLR.

Positions methionine 1–phenylalanine 24 are enriched in basic and acidic residues. The segment at methionine 1–leucine 83 is disordered. Serine 2 carries the post-translational modification N-acetylserine. Serine 2 bears the Phosphoserine mark. Lysine 4 participates in a covalent cross-link: Glycyl lysine isopeptide (Lys-Gly) (interchain with G-Cter in SUMO). Serine 9 is modified (phosphoserine). Glycyl lysine isopeptide (Lys-Gly) (interchain with G-Cter in SUMO) cross-links involve residues lysine 11 and lysine 30. A Phosphothreonine modification is found at threonine 47. A compositionally biased stretch (basic and acidic residues) spans aspartate 51–valine 64. Serine 60 carries the phosphoserine modification. Lysine 63 participates in a covalent cross-link: Glycyl lysine isopeptide (Lys-Gly) (interchain with G-Cter in SUMO). A Phosphoserine modification is found at serine 77. Positions asparagine 116–lysine 411 constitute a Septin-type G domain. The tract at residues glycine 126–threonine 133 is G1 motif. Glycine 126–threonine 133 is a binding site for GTP. Acidic residues predominate over residues glutamate 156–glutamine 167. The interval glutamate 156–lysine 181 is disordered. A compositionally biased stretch (basic and acidic residues) spans glycine 168–arginine 179. Serine 175 is subject to Phosphoserine. The tract at residues aspartate 204 to glycine 207 is G3 motif. GTP is bound by residues glycine 207, lysine 287–glutamate 295, glycine 344, and arginine 360. The segment at alanine 286–aspartate 289 is G4 motif. Lysine 287 participates in a covalent cross-link: Glycyl lysine isopeptide (Lys-Gly) (interchain with G-Cter in SUMO). Residues isoleucine 427 to histidine 508 adopt a coiled-coil conformation. Position 468 is a phosphothreonine (threonine 468). The segment at glutamate 496–arginine 520 is disordered. A compositionally biased stretch (polar residues) spans leucine 497 to proline 510. Serine 509 bears the Phosphoserine mark.

This sequence belongs to the TRAFAC class TrmE-Era-EngA-EngB-Septin-like GTPase superfamily. Septin GTPase family. Component of the septin complex which consists of CDC3, CDC10, CDC11, CDC12 and probably SHS1 and rearranges to a cortical collar of highly ordered filaments at the mother-bud-neck. A complex formed by CDC3, CDC10, CDC11 and CDC12 is capable of forming long filaments in vitro and the components seem to be present in a 2:2:2:2 arrangement in vivo. The filaments are proposed to be formed by the end-to-end polymerization of CDC3-CDC12-CDC11 complexes with CDC10 serving as a bridge to bundle the polymers into paired filaments. Component of the GIN4 complex composed of at least BNI5, CDC3, CDC10, CDC11, CDC12, GIN4, NAP1 and SHS1. Self-associates. Interacts with SIZ1 and SYP1. Post-translationally, phosphorylated by CDC28. Phosphorylation at the end of G1 may facilitate initiation of a new cell cycle by promoting disassembly of the obsolete septin ring from the previous cell cycle. In terms of processing, sumoylated during mitosis on the mother cell side of the bud neck by UBC9/SIZ1. Sumoylation probably plays a central role in regulating septin ring disassembly during the cell cycle.

The protein resides in the membrane. The protein localises to the bud neck. Its function is as follows. Septins are GTPases involved in cytokinesis that assemble early in the cell cycle as a patch at the incipient bud site and form a ring approximate 15 minutes before bud emergence, which transforms into an hour-glass shaped collar of cortical filaments that spans both sides of the mother-bud neck. This collar persists until just before cytokinesis, when it splits into two rings that occupy opposite sides of the neck. The septins at the bud neck serve as a structural scaffold that recruits different components involved in diverse processes at specific stages during the cell cycle. Many proteins bind asymmetrically to the septin collar. The septin assembly is regulated by protein kinases GIN4 and/or CLA4. May act by recruiting MYO1 and HOF1, a protein involved in septation, to the site of cleavage. Septins are also involved in cell morphogenesis, bud site selection, chitin deposition, cell cycle regulation, cell compartmentalization and spore wall formation. The polypeptide is Cell division control protein 3 (CDC3) (Saccharomyces cerevisiae (strain ATCC 204508 / S288c) (Baker's yeast)).